Here is a 493-residue protein sequence, read N- to C-terminus: Glutamate--tRNA ligase (493 aa).

A 'HIGH' region motif is present at residues 10 to 20; the sequence is PSPTGDPHVGT. The short motif at 251–255 is the 'KMSKS' region element; that stretch reads KLSKR. Position 254 (lysine 254) interacts with ATP.

The protein belongs to the class-I aminoacyl-tRNA synthetase family. Glutamate--tRNA ligase type 1 subfamily. In terms of assembly, monomer.

The protein resides in the cytoplasm. It catalyses the reaction tRNA(Glu) + L-glutamate + ATP = L-glutamyl-tRNA(Glu) + AMP + diphosphate. In terms of biological role, catalyzes the attachment of glutamate to tRNA(Glu) in a two-step reaction: glutamate is first activated by ATP to form Glu-AMP and then transferred to the acceptor end of tRNA(Glu). The protein is Glutamate--tRNA ligase of Pseudomonas syringae pv. syringae (strain B728a).